Reading from the N-terminus, the 529-residue chain is Pre-rRNA-processing protein pro-1 (529 aa).

WD repeat units lie at residues 136-175 (AHYQ…SADR) and 287-326 (GHSD…CLKV). A coiled-coil region spans residues 416-518 (ARNEAAKAEK…LKEINKQMYE (103 aa)). Positions 436 to 470 (TLGDDEDDAPEVGNQRRKSGKKNKKNRKNQKKNDF) are disordered. Over residues 450–465 (QRRKSGKKNKKNRKNQ) the composition is skewed to basic residues.

This sequence belongs to the WD repeat IPI3/WDR18 family. As to quaternary structure, component of the PELP1 complex, composed of at least PELP1, TEX10 and WDR18. The complex interacts with pre-60S ribosome particles.

The protein resides in the nucleus. Its subcellular location is the nucleolus. It localises to the nucleoplasm. Component of the PELP1 complex involved in the nucleolar steps of 28S rRNA maturation and the subsequent nucleoplasmic transit of the pre-60S ribosomal subunit. Required for processing ITS2 sequences from rRNA intermediates during 26S rRNA maturation. Required in the soma to promote normal proliferation and prevent germline tumor formation. The protein is Pre-rRNA-processing protein pro-1 of Caenorhabditis elegans.